The chain runs to 210 residues: Large ribosomal subunit protein uL3 (210 aa).

This sequence belongs to the universal ribosomal protein uL3 family. Part of the 50S ribosomal subunit. Forms a cluster with proteins L14 and L19.

Functionally, one of the primary rRNA binding proteins, it binds directly near the 3'-end of the 23S rRNA, where it nucleates assembly of the 50S subunit. The chain is Large ribosomal subunit protein uL3 from Amoebophilus asiaticus (strain 5a2).